The sequence spans 887 residues: MMSDEKNLGVSQKLVSPSRSTSSCSSKQGSRQDSWEVVEGLRGEMNYTQEPPVQKGFLLKKRKWPLKGWHKRFFYLDKGILKYAKSQTDIEREKLHGCIDVGLSVMSVKKSSKCIDLDTEEHIYHLKVKSEEVFDEWVSKLRHHRMYRQNEIAMFPHEVNHFFSGSTITDSSSGVFDSISSRKRSSISKQNLFQTGSNVSFSCGGETRVPLWLQSSEDMEKCSKDLAHCHAYLVEMSQLLQSMDVLHRTYSAPAINAIQGGSFESPKKEKRSHRRWRSRAIGKDAKGTLQVPKPFSGPVRLHSSNPNLSTLDFGEEKNYSDGSETSSEFSKMQEDLCHIAHKVYFTLRSAFNIMSAEREKLKQLMEQDASSSPSAQVIGLKNALSSALAQNTDLKERLRRIHAESLLLDSPAVAKSGDNLAEENSRDENRALVHQLSNESRLSITDSLSEFFDAQEVLLSPSSSENEISDDDSYVSDISDNLSLDNLSNDLDNERQTLGPVLDSGREAKSRRRTCLPAPCPSSSNISLWNILRNNIGKDLSKVAMPVELNEPLNTLQRLCEELEYSELLDKAAQIPSPLERMVYVAAFAISAYASSYYRAGSKPFNPVLGETYECIREDKGFQFFSEQVSHHPPISACHAESRNFVFWQDVRWKNKFWGKSMEIVPIGTTHVTLPVFGDHFEWNKVTSCIHNILSGQRWIEHYGEIVIKNLHDDSCYCKVNFIKAKYWSTNAHEIEGTVFDRSGKAVHRLFGKWHESIYCGGGSSSACVWRANPMPKGYEQYYSFTQFALELNEMDPSSKSLLPPTDTRFRPDQRFLEEGNLEEAEIQKQRIEQLQRERRRVLEENHVEHQPRFFRKSDDDSWVSNGTYLELRKDLGFSKLDHPVLW.

The disordered stretch occupies residues 1–35 (MMSDEKNLGVSQKLVSPSRSTSSCSSKQGSRQDSW). Ser16 and Ser34 each carry phosphoserine. Over residues 16–32 (SPSRSTSSCSSKQGSRQ) the composition is skewed to low complexity. The PH domain maps to 51 to 146 (PPVQKGFLLK…WVSKLRHHRM (96 aa)). The FFAT 1 motif lies at 161–167 (HFFSGST). Ser200, Ser251, and Ser265 each carry phosphoserine. Positions 261–326 (GSFESPKKEK…KNYSDGSETS (66 aa)) are disordered. Residues 268–280 (KEKRSHRRWRSRA) show a composition bias toward basic residues. Phosphoserine is present on residues Ser304, Ser309, Ser320, Ser323, Ser371, Ser372, Ser410, Ser425, Ser437, and Ser440. Residues 450–454 (EFFDA) carry the FFAT 2 motif.

This sequence belongs to the OSBP family. As to quaternary structure, homodimer. Interacts with RRAS. Interacts (phosphorylated form) with VAPA. Interacts with OSBPL6. Post-translationally, phosphorylation is enhanced in vitro by phorbol-12-myristate-13-acetate (PMA), forskolin and calcium ionophore A23187. Phosphorylation seems to be stimulated in conditions of low cell-cell (or cell-matrix) adhesion. Expressed in a subset of small lymphocytes (at protein level). Expressed at high concentration in kidney, lymph node and thymus. Expressed at moderate concentration in stomach, jejunum, ileum, appendix, spleen, leukocytes, trachea, lung and thyroid gland. Expressed at low concentration in whole brain, esophagus, duodenum, ileocecum, colon, skeletal muscle, bone marrow, placenta and mammary gland. Isoform 1a, isoform 1b, isoform 1c and isoform 1d are highly expressed in brain, bone marrow, colon, kidney, lung, skeletal muscle, spleen, thymus and thyroid. Not expressed in heart and liver. Isoform 2a, isoform 2b, isoform 2c and isoform 2d are expressed in brain, bone marrow, kidney, skeletal muscle, spleen, thymus and thyroid. Not expressed in heart, liver and lung.

It is found in the endoplasmic reticulum membrane. It localises to the cytoplasm. The protein resides in the cytosol. The protein localises to the cell membrane. Its subcellular location is the cell projection. It is found in the filopodium tip. It localises to the nucleus membrane. Its function is as follows. Phosphoinositide-binding protein which associates with both cell and endoplasmic reticulum (ER) membranes. Can bind to the ER membrane protein VAPA and recruit VAPA to plasma membrane sites, thus linking these intracellular compartments. The ORP3-VAPA complex stimulates RRAS signaling which in turn attenuates integrin beta-1 (ITGB1) activation at the cell surface. With VAPA, may regulate ER morphology. Has a role in regulation of the actin cytoskeleton, cell polarity and cell adhesion. Binds to phosphoinositides with preference for PI(3,4)P2 and PI(3,4,5)P3. Also binds 25-hydroxycholesterol and cholesterol. The polypeptide is Oxysterol-binding protein-related protein 3 (OSBPL3) (Homo sapiens (Human)).